Consider the following 247-residue polypeptide: MTDQPDLFGLAPDAPRPIIPANLPEDWQEALLPEFSAPYFHELTDFLRQERKEYTIYPPAPDVFNALRYTPLGEVKVLILGQDPYHGPNQAHGLSFSVRPGVRVPPSLRNIYKELTEDIPGFVAPKHGYLRSWAEQGVLLLNAVLTVRAGQANSHQGKGWEHFTDAVIKAVNAKEERVVFILWGSYARKKKKLITGKNHVVIESGHPSPLSEQYFFGTRPFSKTNEALEKAGRGPVEWQLPATVTEE.

The active-site Proton acceptor is the Asp-83.

It belongs to the uracil-DNA glycosylase (UDG) superfamily. UNG family.

Its subcellular location is the cytoplasm. The enzyme catalyses Hydrolyzes single-stranded DNA or mismatched double-stranded DNA and polynucleotides, releasing free uracil.. Its function is as follows. Excises uracil residues from the DNA which can arise as a result of misincorporation of dUMP residues by DNA polymerase or due to deamination of cytosine. The polypeptide is Uracil-DNA glycosylase (Deinococcus radiodurans (strain ATCC 13939 / DSM 20539 / JCM 16871 / CCUG 27074 / LMG 4051 / NBRC 15346 / NCIMB 9279 / VKM B-1422 / R1)).